We begin with the raw amino-acid sequence, 1040 residues long: Multidrug resistance protein MdtB (1040 aa).

A run of 12 helical transmembrane segments spans residues 16–36, 347–367, 369–389, 396–416, 440–460, 472–492, 537–557, 863–883, 888–908, 911–931, 968–988, and 998–1018; these read FIMR…AGII, LMMA…NIPA, IIPG…MVFL, LTLM…IVVI, IGFT…PLLF, FAIT…TLTP, WLTL…WVFI, LGST…VLGI, FIHP…ALLA, IAGS…IGIV, ILMT…STGV, and IGMV…TPVI.

It belongs to the resistance-nodulation-cell division (RND) (TC 2.A.6) family. MdtB subfamily. Part of a tripartite efflux system composed of MdtA, MdtB and MdtC. MdtB forms a heteromultimer with MdtC.

It localises to the cell inner membrane. In terms of biological role, the MdtABC tripartite complex confers resistance against novobiocin and deoxycholate. The protein is Multidrug resistance protein MdtB of Escherichia coli O45:K1 (strain S88 / ExPEC).